The chain runs to 280 residues: uncharacterized protein (280 aa).

The 102-residue stretch at 26-127 (YFMSMKLLDV…TRVSILMRYY (102 aa)) folds into the KilA-N domain.

This is an uncharacterized protein from Vertebrata (FPV).